A 181-amino-acid chain; its full sequence is ADP-ribosylation factor-like protein 1 (181 aa).

A lipid anchor (N-myristoyl glycine) is attached at glycine 2. GTP contacts are provided by residues 24–31, 45–48, glycine 70, 126–129, and 160–161; these read GLDGAGKT, TIPT, NKQD, and AT. 2 residues coordinate Mg(2+): threonine 31 and threonine 48.

The protein belongs to the small GTPase superfamily. Arf family. The GTP-bound form interacts with GOLGA1. The GTP-bound form interacts with GOLGA4 and RGPD8. The GTP-bound form directly interacts with ARFIP2. Binds to SCOC, preferentially in its GTP-bound form. May interact with UNC119. Interacts with ARFIP1; this interaction directs ARFIP1 to the trans-Golgi membranes. Interacts with ARFGEF1 (via N-terminus).

The protein resides in the golgi apparatus membrane. Its subcellular location is the golgi apparatus. It localises to the trans-Golgi network membrane. It is found in the membrane. Its function is as follows. GTP-binding protein that recruits several effectors, such as golgins, arfaptins and Arf-GEFs to the trans-Golgi network, and modulates their functions at the Golgi complex. Plays thereby a role in a wide range of fundamental cellular processes, including cell polarity, innate immunity, or protein secretion mediated by arfaptins, which were shown to play a role in maintaining insulin secretion from pancreatic beta cells. The protein is ADP-ribosylation factor-like protein 1 (ARL1) of Bos taurus (Bovine).